The sequence spans 196 residues: Probable nicotinate-nucleotide adenylyltransferase (196 aa).

The protein belongs to the NadD family.

It carries out the reaction nicotinate beta-D-ribonucleotide + ATP + H(+) = deamido-NAD(+) + diphosphate. It functions in the pathway cofactor biosynthesis; NAD(+) biosynthesis; deamido-NAD(+) from nicotinate D-ribonucleotide: step 1/1. Its function is as follows. Catalyzes the reversible adenylation of nicotinate mononucleotide (NaMN) to nicotinic acid adenine dinucleotide (NaAD). This Thermotoga sp. (strain RQ2) protein is Probable nicotinate-nucleotide adenylyltransferase.